We begin with the raw amino-acid sequence, 138 residues long: Small ribosomal subunit protein uS11c (138 aa).

The tract at residues Met-1–Arg-24 is disordered. Residues Gly-9–Arg-24 show a composition bias toward basic residues.

It belongs to the universal ribosomal protein uS11 family. Part of the 30S ribosomal subunit.

The protein resides in the plastid. Its subcellular location is the chloroplast. This is Small ribosomal subunit protein uS11c from Liriodendron tulipifera (Tuliptree).